Here is a 405-residue protein sequence, read N- to C-terminus: MFILNFNKMKNVKLLLMLGTAALLAACSNEADSLTTSIDAPVTASIDLQSVSYTDLATQLNDVSDFGKMIILKDNGFNRQVHVSMDKRTKIQLDNENVRLFNGRDKDSTSFILGDEFAVLRFYRNGESISYIAYKEAQMMNEIAEFYAAPFKKTRAINEKEAFECIYDSRTRSAGKDIVSVKINIDKAKKILNLPECDYINDYIKTPQVPHGITESQTRAVPSEPKTVYVICLRENGSTIYPNEVSAQMQDAANSVYAVHGLKRYVNFHFVLYTTEYSCPSGDAKEGLEGFTASLKSNPKAEGYDDQIYFLIRWGTWDNKILGMSWFNSYNVNTASDFEASGMSTTQLMYPGVMAHELGHILGAEHTDNSKDLMYATFTGYLSHLSEKNMDIIAKNLGWEAADGD.

The N-terminal stretch at 1-25 (MFILNFNKMKNVKLLLMLGTAALLA) is a signal peptide. His356 is a binding site for Zn(2+). Residue Glu357 is part of the active site. 2 residues coordinate Zn(2+): His360 and His366.

The protein belongs to the peptidase M10C family. Requires Zn(2+) as cofactor.

It is found in the secreted. The enzyme catalyses Broad proteolytic specificity, bonds hydrolyzed includes -Gly-|-Leu-, -Met-|-Leu-, -Phe-|-Leu-, -Cys-|-Leu-, -Leu-|-Gly-.. Its function is as follows. Diarrheal toxin that hydrolyzes gelatin, azocoll, actin, tropomyosin, and fibrinogen. This chain is Fragilysin (btfP), found in Bacteroides fragilis.